The primary structure comprises 99 residues: Large ribosomal subunit protein P1 (99 aa).

As to quaternary structure, part of the 50S ribosomal subunit. Homodimer, it forms part of the ribosomal stalk which helps the ribosome interact with GTP-bound translation factors. Forms both a pentameric uL10/P0(P1)2(P1)2 and heptameric uL10/P0(P1)2(P1)2(P1)2 complex, where uL10/P0 forms an elongated spine to which the P1 dimers bind in a sequential fashion. The proportion of heptameric complexes increases during cell growth.

In terms of biological role, forms part of the ribosomal stalk, playing a central role in the interaction of the ribosome with GTP-bound translation factors. This chain is Large ribosomal subunit protein P1, found in Methanococcus vannielii.